A 195-amino-acid polypeptide reads, in one-letter code: MRLLLLLLVAASAVVRSEASANLGGVPSKRLKMQYATGPLLKFQICVSUGYRRVFEEYMRVISQRYPDIRIEGENYLPQPIYRHIASFLSVFKLVLIGLIIVGKDPFAFFGMQAPSIWQWGQENKVYACMMVFFLSNMIENQCMSTGAFEITLNDVPVWSKLESGHLPSMQQLVQILDNEMKLNVHMDSIPHHRS.

Positions 1–19 (MRLLLLLLVAASAVVRSEA) are cleaved as a signal peptide. The segment at residues 46 to 49 (CVSU) is a cross-link (cysteinyl-selenocysteine (Cys-Sec)). Residue Sec49 is a non-standard amino acid, selenocysteine. Residues 85-103 (IASFLSVFKLVLIGLIIVG) form a helical membrane-spanning segment.

The protein belongs to the SelWTH family. Selenoprotein T subfamily. Post-translationally, may contain a selenide-sulfide bond between Cys-46 and Sec-49. This bond is speculated to serve as redox-active pair. In terms of tissue distribution, ubiquitous. Highly expressed in the endocrine pancreas. Expressed at low levels in the adult brain.

It is found in the endoplasmic reticulum membrane. The enzyme catalyses [thioredoxin]-dithiol + NADP(+) = [thioredoxin]-disulfide + NADPH + H(+). Functionally, selenoprotein with thioredoxin reductase-like oxidoreductase activity. Protects dopaminergic neurons against oxidative stress and cell death. Involved in ADCYAP1/PACAP-induced calcium mobilization and neuroendocrine secretion. Plays a role in fibroblast anchorage and redox regulation. In gastric smooth muscle, modulates the contraction processes through the regulation of calcium release and MYLK activation. In pancreatic islets, involved in the control of glucose homeostasis, contributes to prolonged ADCYAP1/PACAP-induced insulin secretion. This chain is Thioredoxin reductase-like selenoprotein T, found in Mus musculus (Mouse).